Here is a 221-residue protein sequence, read N- to C-terminus: Oxaloacetate tautomerase FAHD1, mitochondrial (221 aa).

The transit peptide at 1-24 directs the protein to the mitochondrion; it reads MAASRPLSRFWEWGKNIVCVGRNY. Phosphoserine is present on Ser-37. Mg(2+)-binding residues include Glu-68, Glu-70, and Asp-99. Lys-110 carries the post-translational modification N6-acetyllysine. Lys-112 is subject to N6-succinyllysine.

The protein belongs to the FAH family. As to quaternary structure, homodimer. It depends on Mg(2+) as a cofactor. The cofactor is Mn(2+).

Its subcellular location is the mitochondrion. It localises to the cytoplasm. It is found in the cytosol. The enzyme catalyses oxaloacetate = enol-oxaloacetate. The catalysed reaction is oxaloacetate + H(+) = pyruvate + CO2. It carries out the reaction a 3-acylpyruvate + H2O = a carboxylate + pyruvate + H(+). It catalyses the reaction acetylpyruvate + H2O = acetate + pyruvate + H(+). The enzyme catalyses 3-fumarylpyruvate + H2O = fumarate + pyruvate + H(+). Oxaloacetate decarboxylation is competitively inhibited by oxalate. Tautomerase that converts enol-oxaloacetate, a strong inhibitor of succinate dehydrogenase, to the physiological keto form of oxaloacetate. It is thereby required to maximize aerobic respiration efficiency by preventing succinate dehydrogenase inhibition. Also acts as a weak oxaloacetate decarboxylase (ODx), catalyzing the decarboxylation of oxaloacetate (OAA) to pyruvate and CO(2), and as such is likely a regulatory enzyme in the TCA cycle. Also displays acylpyruvase activity, being able to hydrolyze acetylpyruvate and fumarylpyruvate in vitro. This Bos taurus (Bovine) protein is Oxaloacetate tautomerase FAHD1, mitochondrial.